The primary structure comprises 335 residues: Beta-ketoacyl-[acyl-carrier-protein] synthase III 2 (335 aa).

Active-site residues include Cys-116 and His-256. The tract at residues 257-261 (QANVR) is ACP-binding. Residue Asn-286 is part of the active site.

This sequence belongs to the thiolase-like superfamily. FabH family. In terms of assembly, homodimer.

Its subcellular location is the cytoplasm. The catalysed reaction is malonyl-[ACP] + acetyl-CoA + H(+) = 3-oxobutanoyl-[ACP] + CO2 + CoA. The protein operates within lipid metabolism; fatty acid biosynthesis. Catalyzes the condensation reaction of fatty acid synthesis by the addition to an acyl acceptor of two carbons from malonyl-ACP. Catalyzes the first condensation reaction which initiates fatty acid synthesis and may therefore play a role in governing the total rate of fatty acid production. Possesses both acetoacetyl-ACP synthase and acetyl transacylase activities. Its substrate specificity determines the biosynthesis of branched-chain and/or straight-chain of fatty acids. The polypeptide is Beta-ketoacyl-[acyl-carrier-protein] synthase III 2 (Bacteroides thetaiotaomicron (strain ATCC 29148 / DSM 2079 / JCM 5827 / CCUG 10774 / NCTC 10582 / VPI-5482 / E50)).